Here is a 476-residue protein sequence, read N- to C-terminus: CDK5 and ABL1 enzyme substrate 2 (476 aa).

Residues 1-119 (MAAAAAGGAP…GLGLDGQRQR (119 aa)) are disordered. Residues 30–40 (PRRRGDSRRRQ) are compositionally biased toward basic residues. A compositionally biased stretch (pro residues) spans 65–96 (PAPPPPPPTEAREAPAPPPAPPGGLPGLPARP). Residues Ser-128 and Ser-206 each carry the phosphoserine modification. A disordered region spans residues 256-295 (DSHGLLPQPRPSIPRAPPGSRHKPVPTKSTPAGTELGSDG). Residues 263 to 272 (QPRPSIPRAP) are compositionally biased toward pro residues.

Belongs to the cyclin family. As to quaternary structure, binds to CDK3, CDK5 and ABL1. The C-terminal cyclin-box-like region binds to CDK5. In terms of tissue distribution, widely expressed.

In terms of biological role, unknown. Probably involved in G1-S cell cycle transition. The sequence is that of CDK5 and ABL1 enzyme substrate 2 (Cables2) from Mus musculus (Mouse).